The sequence spans 129 residues: Azurin iso-2 (129 aa).

The Plastocyanin-like domain maps to 1 to 129 (ASCETTVTSG…MMRGTLKLEE (129 aa)). Cysteine 3 and cysteine 26 are joined by a disulfide. Residues histidine 46, cysteine 112, histidine 117, and methionine 121 each coordinate Cu cation.

It localises to the periplasm. Functionally, this methylothroph organism uses azurin in the oxidation of methylamine. Iso-2 is probably the acceptor of electrons from methylamine dehydrogenase. This is Azurin iso-2 from Methylomonas sp. (strain J).